The sequence spans 276 residues: NAD-capped RNA hydrolase NudC (276 aa).

R82 contributes to the substrate binding site. Residues C112 and C115 each coordinate Zn(2+). E125 contributes to the substrate binding site. Zn(2+)-binding residues include C130 and C133. Residue Y138 participates in substrate binding. A Nudix hydrolase domain is found at 139 to 262 (PRISPSMIVL…SIARYLIDLY (124 aa)). The a divalent metal cation site is built by A172, E188, and E192. The Nudix box motif lies at 173 to 194 (GFAEPGESAEECLVREVREEVA). 206-213 (QCWPFPHS) is a binding site for substrate. E233 contacts a divalent metal cation. A255 lines the substrate pocket.

Belongs to the Nudix hydrolase family. NudC subfamily. In terms of assembly, homodimer. Mg(2+) is required as a cofactor. It depends on Mn(2+) as a cofactor. Requires Zn(2+) as cofactor.

The enzyme catalyses a 5'-end NAD(+)-phospho-ribonucleoside in mRNA + H2O = a 5'-end phospho-adenosine-phospho-ribonucleoside in mRNA + beta-nicotinamide D-ribonucleotide + 2 H(+). It carries out the reaction NAD(+) + H2O = beta-nicotinamide D-ribonucleotide + AMP + 2 H(+). It catalyses the reaction NADH + H2O = reduced beta-nicotinamide D-ribonucleotide + AMP + 2 H(+). In terms of biological role, mRNA decapping enzyme that specifically removes the nicotinamide adenine dinucleotide (NAD) cap from a subset of mRNAs by hydrolyzing the diphosphate linkage to produce nicotinamide mononucleotide (NMN) and 5' monophosphate mRNA. The NAD-cap is present at the 5'-end of some mRNAs and stabilizes RNA against 5'-processing. Has preference for mRNAs with a 5'-end purine. Catalyzes the hydrolysis of a broad range of dinucleotide pyrophosphates. In Pseudomonas entomophila (strain L48), this protein is NAD-capped RNA hydrolase NudC.